The primary structure comprises 893 residues: MNEGAGAREIASLTPMMRQYMEVKALHPDSLLFFRLGDFYEMFFEDAVKASEILQITLTARSKGADKVPMCGVPYHAARRYIGRLVSEGLKVAICEQVEEPGNGPGIVRREVTRVITPGMVLDEEVLEPQASNFLAAVSWNDKGWGAALLEASTGEFMALEAPGIAELAESLSRVEPRELLVPDGKRDAPEVAQLLARLVRTPAVAEGEAASFEPTRAAGYLRSHFAVQSLSAFGLDDAPLAAGAAGAALRYLKDTQKTAAAHVDRLSRQERGGNLLMDESSRANLEVLRSLRDGGRKGSLLGVLDKTVTSLGARKLARWLASPLGSLPEIHARLDAVEELSGRSVWREELAGILKEVGDLERLCGRLSLGAGNARDLRALGLSLAQLPRVVAVLARCESPLLKSLTGPLSALPELAELLSRAVAEEPPVTLKDGGMIRAGFHAELDKLVALSTSGKDLLLQIEQREKERTGISSLKVRYNKVFGYYLEVTKSNLDRVPKDYIRKQTTVNSERFVTPELKEYEEQVLTAEERRCALEIQLFEELRAQVVSAAPRIRSAAEAVATGDALLSFARCAAEYGYTRPEVDASVALSITAGRHPVVERMLGAGDSFVPNDVRLDPAEDAQLMVITGPNMAGKSTVMRQVALTALMAQAGSFVPAKAARIGLCDRIFTRVGAADNLARGQSTFMVEMTETSHILHHATNKSLIILDEIGRGTSTFDGLSIAWAVAEHLHDTVGARALFATHYHELVDLARERPRVKNLCVAVKEQNGKVIFLRKLVPGGASRSYGIEVAKLAGLPPEVVGRARELLQNLESGELDDAGRPRVAVRQPQGGRRGASTGQLGLFGMEPAQGGTGVTPAQQKALDALKGASIDRMTPLDALNLLAKLQRELE.

631 to 638 (GPNMAGKS) lines the ATP pocket. The disordered stretch occupies residues 821–858 (AGRPRVAVRQPQGGRRGASTGQLGLFGMEPAQGGTGVT).

Belongs to the DNA mismatch repair MutS family.

In terms of biological role, this protein is involved in the repair of mismatches in DNA. It is possible that it carries out the mismatch recognition step. This protein has a weak ATPase activity. The polypeptide is DNA mismatch repair protein MutS (Myxococcus xanthus (strain DK1622)).